The sequence spans 358 residues: 4-hydroxy-3-methylbut-2-en-1-yl diphosphate synthase (flavodoxin) (358 aa).

The [4Fe-4S] cluster site is built by Cys270, Cys273, Cys305, and Glu312.

The protein belongs to the IspG family. [4Fe-4S] cluster serves as cofactor.

The enzyme catalyses (2E)-4-hydroxy-3-methylbut-2-enyl diphosphate + oxidized [flavodoxin] + H2O + 2 H(+) = 2-C-methyl-D-erythritol 2,4-cyclic diphosphate + reduced [flavodoxin]. It functions in the pathway isoprenoid biosynthesis; isopentenyl diphosphate biosynthesis via DXP pathway; isopentenyl diphosphate from 1-deoxy-D-xylulose 5-phosphate: step 5/6. Converts 2C-methyl-D-erythritol 2,4-cyclodiphosphate (ME-2,4cPP) into 1-hydroxy-2-methyl-2-(E)-butenyl 4-diphosphate. This is 4-hydroxy-3-methylbut-2-en-1-yl diphosphate synthase (flavodoxin) from Vesicomyosocius okutanii subsp. Calyptogena okutanii (strain HA).